A 444-amino-acid chain; its full sequence is Chromosome partition protein MukF (444 aa).

The tract at residues 212-240 (LDETSGNLRELQDTLNAAGDKLQAQLLRI) is leucine-zipper.

Belongs to the MukF family. In terms of assembly, interacts, and probably forms a ternary complex, with MukE and MukB via its C-terminal region. The complex formation is stimulated by calcium or magnesium. It is required for an interaction between MukE and MukB.

It localises to the cytoplasm. Its subcellular location is the nucleoid. Involved in chromosome condensation, segregation and cell cycle progression. May participate in facilitating chromosome segregation by condensation DNA from both sides of a centrally located replisome during cell division. Not required for mini-F plasmid partitioning. Probably acts via its interaction with MukB and MukE. Overexpression results in anucleate cells. It has a calcium binding activity. The polypeptide is Chromosome partition protein MukF (Haemophilus influenzae (strain PittEE)).